A 1054-amino-acid chain; its full sequence is Filament-like plant protein 6 (1054 aa).

Coiled coils occupy residues 64–139 (VQIK…VKQH), 174–200 (AEDR…KDHE), and 250–341 (SNML…RKKL). 2 disordered regions span residues 359–390 (RDSG…GSEF) and 448–506 (EAQL…KEKD). 3 stretches are compositionally biased toward low complexity: residues 371–380 (VKVSSPCKSP), 450–461 (QLQQNNSQKSSL), and 470–494 (SNPS…GSLS). A coiled-coil region spans residues 389-463 (EFSLDNAQKF…NNSQKSSLEV (75 aa)). 2 coiled-coil regions span residues 637-666 (QNLV…RIHD) and 788-944 (ESDS…IFVL). The disordered stretch occupies residues 951-1054 (FRPQPEQMRS…SRFFSSKSGY (104 aa)). The segment covering 1007 to 1032 (PSDSETSDTTTSPSRVGSRLSRSGSS) has biased composition (low complexity).

Belongs to the FPP family. Interacts with WPP/MAF proteins.

The sequence is that of Filament-like plant protein 6 (FPP6) from Arabidopsis thaliana (Mouse-ear cress).